The chain runs to 331 residues: dTDP-glucose 4,6-dehydratase (331 aa).

Residues 11-12 (FI), 33-36 (DALT), 57-58 (DI), 77-81 (FAAES), and T96 each bind NAD(+). S81 lines the substrate pocket. Substrate is bound at residue T120. Residue D121 is the Proton donor of the active site. Catalysis depends on proton acceptor residues E122 and Y147. 147–151 (YSATK) provides a ligand contact to NAD(+). N176 contributes to the substrate binding site. An NAD(+)-binding site is contributed by N177. Substrate contacts are provided by residues 186–191 (KFIPRQ), 202–204 (KLY), R211, N246, and 269–273 (DRVGH).

This sequence belongs to the NAD(P)-dependent epimerase/dehydratase family. dTDP-glucose dehydratase subfamily. In terms of assembly, homodimer. Requires NAD(+) as cofactor.

It carries out the reaction dTDP-alpha-D-glucose = dTDP-4-dehydro-6-deoxy-alpha-D-glucose + H2O. It functions in the pathway carbohydrate biosynthesis; dTDP-L-rhamnose biosynthesis. Its function is as follows. Catalyzes the dehydration of dTDP-D-glucose to form dTDP-6-deoxy-D-xylo-4-hexulose via a three-step process involving oxidation, dehydration and reduction. Involved in the biosynthesis of the dTDP-L-rhamnose which is a component of the critical linker, D-N-acetylglucosamine-L-rhamnose disaccharide, which connects the galactan region of arabinogalactan to peptidoglycan via a phosphodiester linkage. The polypeptide is dTDP-glucose 4,6-dehydratase (rmlB) (Mycobacterium tuberculosis (strain CDC 1551 / Oshkosh)).